We begin with the raw amino-acid sequence, 56 residues long: Serine protease inhibitor Kazal-type 1 (56 aa).

Residues 3–56 (LGREAKCNNNAGGCTKIYNPVCGTDGNTYPNECMLCVENQKRQMPVLIQRSGPC) enclose the Kazal-like domain. 3 disulfide bridges follow: Cys9–Cys38, Cys16–Cys35, and Cys24–Cys56.

Its subcellular location is the secreted. Functionally, serine protease inhibitor which exhibits anti-trypsin activity. In the pancreas, protects against trypsin-catalyzed premature activation of zymogens. In the male reproductive tract, binds to sperm heads where it modulates sperm capacitance by inhibiting calcium uptake and nitrogen oxide (NO) production. This Equus caballus (Horse) protein is Serine protease inhibitor Kazal-type 1 (SPINK1).